Consider the following 1297-residue polypeptide: Regulator of V-ATPase in vacuolar membrane protein 1 (1297 aa).

Basic and acidic residues-rich tracts occupy residues 1161 to 1171 (DQEIHENKDSQ) and 1260 to 1269 (AVEKTHDSPK). Disordered regions lie at residues 1161 to 1182 (DQEIHENKDSQRNSTNEPVRNK) and 1260 to 1297 (AVEKTHDSPKLGKTLMGQDIRPTPDDVPEFNESAFSFE).

In terms of assembly, component of the RAVE complex composed of rav1, rav2 and skp1. Interacts with vam2.

It localises to the cytoplasm. The protein resides in the nucleus. The protein localises to the endomembrane system. Component of the RAVE complex which is required for stable assembly of the vacuolar ATPase complex V-ATPase. In Schizosaccharomyces pombe (strain 972 / ATCC 24843) (Fission yeast), this protein is Regulator of V-ATPase in vacuolar membrane protein 1 (rav1).